The primary structure comprises 342 residues: MSSPISAVSQMLERNQALFVGKRLLVCGALEDDYPRQLATLTHSLTVFTTDYCYYRSQQAALGDAILFDHQLGGAPRFDALLLLMPKAKAEAQYLLAMMTPLLEAGAELFLAGENRGGINGADKLLAPYGDKPVKRDSARRCSLYHGELSKPVEPFELDSWFGRYQCQAGDTELTVLALPGVFSASELDLGSQMLLASLPAMQGSLLDFGCGAGVIGSVLAKRNPGLKVTMVDINALALESSRRTLAINGLQGEVWASDVYSDIQGKFGRIVSNPPFHAGLKTFYAATETFLAKAPDHLQSQGSLTIVANAFLRYQPILETHFKRTEVISSDAKFKVYLSKV.

It belongs to the methyltransferase superfamily. RsmC family. Monomer.

It localises to the cytoplasm. It carries out the reaction guanosine(1207) in 16S rRNA + S-adenosyl-L-methionine = N(2)-methylguanosine(1207) in 16S rRNA + S-adenosyl-L-homocysteine + H(+). In terms of biological role, specifically methylates the guanine in position 1207 of 16S rRNA in the 30S particle. This Aeromonas hydrophila subsp. hydrophila (strain ATCC 7966 / DSM 30187 / BCRC 13018 / CCUG 14551 / JCM 1027 / KCTC 2358 / NCIMB 9240 / NCTC 8049) protein is Ribosomal RNA small subunit methyltransferase C.